Here is a 408-residue protein sequence, read N- to C-terminus: BTB/POZ and MATH domain-containing protein 3 (408 aa).

One can recognise an MATH domain in the interval 24-158 (NGSHQFTIQG…DDCLVINCTV (135 aa)). The BTB domain occupies 194–261 (CDIAFQVGDE…IYTDVLPNVH (68 aa)).

This sequence belongs to the Tdpoz family. As to quaternary structure, homodimer or heterodimer with BPM3 and BPM5. Interacts with CUL3A and CUL3B. Interacts with RAP2-4 and RAP2-13. Binds to MYB56 at the promoter of FLOWERING LOCUS T (FT). In terms of tissue distribution, ubiquitous.

It is found in the nucleus. Its subcellular location is the cytoplasm. It participates in protein modification; protein ubiquitination. Functionally, may act as a substrate-specific adapter of an E3 ubiquitin-protein ligase complex (CUL3-RBX1-BTB) which mediates the ubiquitination and subsequent proteasomal degradation of target proteins. In Arabidopsis thaliana (Mouse-ear cress), this protein is BTB/POZ and MATH domain-containing protein 3.